Consider the following 115-residue polypeptide: NAD(P)H-quinone oxidoreductase subunit M (115 aa).

Belongs to the complex I NdhM subunit family. In terms of assembly, NDH-1 can be composed of about 15 different subunits; different subcomplexes with different compositions have been identified which probably have different functions.

It is found in the cellular thylakoid membrane. It catalyses the reaction a plastoquinone + NADH + (n+1) H(+)(in) = a plastoquinol + NAD(+) + n H(+)(out). The catalysed reaction is a plastoquinone + NADPH + (n+1) H(+)(in) = a plastoquinol + NADP(+) + n H(+)(out). Functionally, NDH-1 shuttles electrons from an unknown electron donor, via FMN and iron-sulfur (Fe-S) centers, to quinones in the respiratory and/or the photosynthetic chain. The immediate electron acceptor for the enzyme in this species is believed to be plastoquinone. Couples the redox reaction to proton translocation, and thus conserves the redox energy in a proton gradient. Cyanobacterial NDH-1 also plays a role in inorganic carbon-concentration. This chain is NAD(P)H-quinone oxidoreductase subunit M, found in Trichodesmium erythraeum (strain IMS101).